Consider the following 68-residue polypeptide: Conotoxin ArMMSK-01 (68 aa).

The first 20 residues, 1 to 20, serve as a signal peptide directing secretion; the sequence is MMSKLGVLLTICMLLFPLTA. A propeptide spanning residues 21-51 is cleaved from the precursor; sequence LPLDGDQPADRPAERMQDDFISEQHPLFNPI. 3 cysteine pairs are disulfide-bonded: C54–C67, C55–C63, and C59–C66. P65 is subject to 4-hydroxyproline.

The protein belongs to the conotoxin M superfamily. In terms of tissue distribution, expressed by the venom duct.

The protein resides in the secreted. This Conus arenatus (Sand-dusted cone) protein is Conotoxin ArMMSK-01.